The primary structure comprises 702 residues: Ribosomal RNA large subunit methyltransferase K/L (702 aa).

The region spanning 43-154 (LIYQSLMWSR…KETASIALDL (112 aa)) is the THUMP domain.

It belongs to the methyltransferase superfamily. RlmKL family.

Its subcellular location is the cytoplasm. It catalyses the reaction guanosine(2445) in 23S rRNA + S-adenosyl-L-methionine = N(2)-methylguanosine(2445) in 23S rRNA + S-adenosyl-L-homocysteine + H(+). The enzyme catalyses guanosine(2069) in 23S rRNA + S-adenosyl-L-methionine = N(2)-methylguanosine(2069) in 23S rRNA + S-adenosyl-L-homocysteine + H(+). Specifically methylates the guanine in position 2445 (m2G2445) and the guanine in position 2069 (m7G2069) of 23S rRNA. This Salmonella choleraesuis (strain SC-B67) protein is Ribosomal RNA large subunit methyltransferase K/L.